Here is a 483-residue protein sequence, read N- to C-terminus: Zinc metalloproteinase/disintegrin (483 aa).

Positions 1 to 20 are cleaved as a signal peptide; that stretch reads MIQVLLVTLCLAAFPYQGSS. Positions 21 to 190 are excised as a propeptide; it reads IILESGNVND…KKASQLNLTP (170 aa). Positions 198–394 constitute a Peptidase M12B domain; it reads RYIELVVVAD…HNPQCMLNEP (197 aa). Positions 201 and 285 each coordinate Ca(2+). 3 cysteine pairs are disulfide-bonded: cysteine 309/cysteine 389, cysteine 349/cysteine 373, and cysteine 351/cysteine 356. Histidine 334 lines the Zn(2+) pocket. Glutamate 335 is an active-site residue. Zn(2+) is bound by residues histidine 338 and histidine 344. The Ca(2+) site is built by cysteine 389 and asparagine 392. Positions 395–418 are excised as a propeptide; sequence LRTDIVSTPVSGNELLETGEESDF. The Disintegrin domain maps to 402–483; sequence TPVSGNELLE…AGCPRNPFHA (82 aa). 4 disulfides stabilise this stretch: cysteine 425/cysteine 448, cysteine 439/cysteine 445, cysteine 444/cysteine 469, and cysteine 457/cysteine 476. The Cell attachment site signature appears at 461–463; that stretch reads RGD.

The protein belongs to the venom metalloproteinase (M12B) family. P-II subfamily. P-IId sub-subfamily. In terms of assembly, homodimer; disulfide-linked (disintegrin). Zn(2+) serves as cofactor. As to expression, expressed by the venom gland.

The protein localises to the secreted. In terms of biological role, impairs hemostasis in the envenomed animal. This protein has not been identified in the venom. Functionally, inhibits ADP-induced platelet aggregation. Binds and inhibits integrins GPIIb/GPIIIa (ITGA2B/ITGB3), alpha-5/beta-1 (ITGA5/ITGB1), alpha-V/beta-3 (ITGAV/ITGB3), and alpha-V/beta-5 (ITGAV/ITGB5). It blocks cancer cell adhesion (tested on human breast cancer cell line MDA-MB-435) to fibronectin and vitronectin and thus prevents invasion of cancer cells. This is Zinc metalloproteinase/disintegrin from Agkistrodon contortrix contortrix (Southern copperhead).